We begin with the raw amino-acid sequence, 102 residues long: Large ribosomal subunit protein bL21 (102 aa).

This sequence belongs to the bacterial ribosomal protein bL21 family. As to quaternary structure, part of the 50S ribosomal subunit. Contacts protein L20.

This protein binds to 23S rRNA in the presence of protein L20. This Ehrlichia ruminantium (strain Welgevonden) protein is Large ribosomal subunit protein bL21.